The sequence spans 131 residues: Phosphoribosyl-AMP cyclohydrolase (131 aa).

A Mg(2+)-binding site is contributed by aspartate 78. Residue cysteine 79 coordinates Zn(2+). 2 residues coordinate Mg(2+): aspartate 80 and aspartate 82. Residues cysteine 96 and cysteine 103 each coordinate Zn(2+).

Belongs to the PRA-CH family. In terms of assembly, homodimer. Mg(2+) serves as cofactor. The cofactor is Zn(2+).

Its subcellular location is the cytoplasm. It catalyses the reaction 1-(5-phospho-beta-D-ribosyl)-5'-AMP + H2O = 1-(5-phospho-beta-D-ribosyl)-5-[(5-phospho-beta-D-ribosylamino)methylideneamino]imidazole-4-carboxamide. It participates in amino-acid biosynthesis; L-histidine biosynthesis; L-histidine from 5-phospho-alpha-D-ribose 1-diphosphate: step 3/9. Its function is as follows. Catalyzes the hydrolysis of the adenine ring of phosphoribosyl-AMP. The polypeptide is Phosphoribosyl-AMP cyclohydrolase (Thioalkalivibrio sulfidiphilus (strain HL-EbGR7)).